Consider the following 153-residue polypeptide: Peptidyl-prolyl cis-trans isomerase FKBP15-1 (153 aa).

An N-terminal signal peptide occupies residues 1–25 (MMSSASAMKAVGFLLLLTILTLAYA). The PPIase FKBP-type domain maps to 52 to 140 (GDKIKVHYRG…IFDTELVAVN (89 aa)). The short motif at 150–153 (KNEL) is the Prevents secretion from ER element.

It belongs to the FKBP-type PPIase family.

The protein resides in the endoplasmic reticulum lumen. It carries out the reaction [protein]-peptidylproline (omega=180) = [protein]-peptidylproline (omega=0). In terms of biological role, PPIases accelerate the folding of proteins. It catalyzes the cis-trans isomerization of proline imidic peptide bonds in oligopeptides. The chain is Peptidyl-prolyl cis-trans isomerase FKBP15-1 (FKBP15-1) from Arabidopsis thaliana (Mouse-ear cress).